Consider the following 253-residue polypeptide: Chloride intracellular channel protein 4 (253 aa).

At Ala2 the chain carries N-acetylalanine. Residues 2–101 (ALSMPLNGLK…EEFLEEVLCP (100 aa)) are required for insertion into the membrane. Position 4 is a phosphoserine (Ser4). At Lys24 the chain carries N6-acetyllysine. The short motif at 35-38 (CPFS) is the G-site element. The helical transmembrane segment at 37–57 (FSQRLFMILWLKGVVFSVTTV) threads the bilayer. Positions 81–244 (NSEVKTDVNK…PSDKEVEIAY (164 aa)) constitute a GST C-terminal domain. Lys130 is subject to N6-acetyllysine. Phosphoserine is present on residues Ser132, Ser167, and Ser236. At Tyr244 the chain carries Phosphotyrosine.

It belongs to the chloride channel CLIC family. As to quaternary structure, monomer. Interacts with HRH30. Interacts with AKAP9. As to expression, detected in blood vessels in the retina (at protein level). Expressed to the greatest extent in vivo in heart, lung, liver, kidney, and skin.

It is found in the cytoplasm. The protein resides in the cytoskeleton. Its subcellular location is the microtubule organizing center. The protein localises to the centrosome. It localises to the cytoplasmic vesicle membrane. It is found in the nucleus. The protein resides in the cell membrane. Its subcellular location is the mitochondrion. The protein localises to the cell junction. It catalyses the reaction chloride(in) = chloride(out). The catalysed reaction is thiocyanate(in) = thiocyanate(out). It carries out the reaction nitrate(in) = nitrate(out). The enzyme catalyses iodide(out) = iodide(in). It catalyses the reaction bromide(in) = bromide(out). The catalysed reaction is fluoride(in) = fluoride(out). It carries out the reaction choline(out) = choline(in). In the soluble state, catalyzes glutaredoxin-like thiol disulfide exchange reactions with reduced glutathione as electron donor. Can insert into membranes and form voltage-dependent multi-ion conductive channels. Membrane insertion seems to be redox-regulated and may occur only under oxidizing conditions. Has alternate cellular functions like a potential role in angiogenesis or in maintaining apical-basolateral membrane polarity during mitosis and cytokinesis. Could also promote endothelial cell proliferation and regulate endothelial morphogenesis (tubulogenesis). Promotes cell-surface expression of HRH3. In Mus musculus (Mouse), this protein is Chloride intracellular channel protein 4 (Clic4).